A 310-amino-acid chain; its full sequence is MAPKIFIDGEHGTTGLQIRTRMAGRRDVELLSIPEAERRNAAMREDMLNSADIAILCLPDDASKEAVQMVSANNNVRVIDTSTAFRVNPGWAYGFAEMDGAQADRIKAARFVANPGCYPTGAIGLIRPLRAAGLLPDGYPVTVNAVSGYTGGGKQMIAQMENPDHPDAITAPHFLYGLPLTHKHVPEMTVHGLLDRAPIFSPSVGKFAQGMIVQVPLHLGDLAEGTTMESIHAALVAHYAGQEIVTVVPLAESKALSRVNAVELEGKDTMKLFVFGTPGASQVNLVALLDNLGKGASGAAVQNMDLMLAS.

Cys117 is a catalytic residue.

The protein belongs to the NAGSA dehydrogenase family. Type 2 subfamily.

It is found in the cytoplasm. The enzyme catalyses N-acetyl-L-glutamate 5-semialdehyde + phosphate + NADP(+) = N-acetyl-L-glutamyl 5-phosphate + NADPH + H(+). It functions in the pathway amino-acid biosynthesis; L-arginine biosynthesis; N(2)-acetyl-L-ornithine from L-glutamate: step 3/4. In terms of biological role, catalyzes the NADPH-dependent reduction of N-acetyl-5-glutamyl phosphate to yield N-acetyl-L-glutamate 5-semialdehyde. This Rhizobium leguminosarum bv. trifolii (strain WSM2304) protein is N-acetyl-gamma-glutamyl-phosphate reductase.